The sequence spans 99 residues: Small integral membrane protein 14 (99 aa).

The Lumenal segment spans residues 1 to 49; that stretch reads MAEGGFDPCECVCSHEHAMRRLINLLRQSQSYCTDTECLQELPGPSGDN. Residues 50–70 form a helical membrane-spanning segment; sequence GISVTMILVAWMVIALILFLL. At 71-99 the chain is on the cytoplasmic side; that stretch reads RPPNLRGSSLPGKPTSPHNGQDPPAPPVD. The disordered stretch occupies residues 78–99; it reads SSLPGKPTSPHNGQDPPAPPVD.

It localises to the endoplasmic reticulum membrane. This chain is Small integral membrane protein 14 (SMIM14), found in Homo sapiens (Human).